The sequence spans 255 residues: Ribonuclease HII (255 aa).

Positions 58–247 (RYIAGIDEAG…VKSMVLGARY (190 aa)) constitute an RNase H type-2 domain. Residues aspartate 64, glutamate 65, and aspartate 156 each contribute to the a divalent metal cation site.

This sequence belongs to the RNase HII family. It depends on Mn(2+) as a cofactor. Requires Mg(2+) as cofactor.

The protein resides in the cytoplasm. It carries out the reaction Endonucleolytic cleavage to 5'-phosphomonoester.. In terms of biological role, endonuclease that specifically degrades the RNA of RNA-DNA hybrids. The sequence is that of Ribonuclease HII from Syntrophomonas wolfei subsp. wolfei (strain DSM 2245B / Goettingen).